We begin with the raw amino-acid sequence, 353 residues long: Protein MGF 360-11L (353 aa).

An ANK repeat occupies 59–88 (ELNTVLMKAAKENNHDLIRLFVEWGADINY).

It belongs to the asfivirus MGF 360 family. Interacts with host TBK1 ad IRF7.

Plays a role in virus cell tropism, and may be required for efficient virus replication in macrophages. In addition, inhibits the phosphorylation of host TBK1 and IRF7 and thereby negatively regulates the host cGAS signaling pathway and antagonizes IFN-mediated antiviral activity. The polypeptide is Protein MGF 360-11L (African swine fever virus (isolate Pig/Kenya/KEN-50/1950) (ASFV)).